Consider the following 141-residue polypeptide: Hemoglobin subunit alpha (141 aa).

The Globin domain occupies valine 1 to arginine 141. Position 3 is a phosphoserine (serine 3). At lysine 7 the chain carries N6-succinyllysine. Threonine 8 is modified (phosphothreonine). Lysine 11 carries the N6-succinyllysine modification. The residue at position 16 (lysine 16) is an N6-acetyllysine; alternate. The residue at position 16 (lysine 16) is an N6-succinyllysine; alternate. Tyrosine 24 is modified (phosphotyrosine). The residue at position 35 (serine 35) is a Phosphoserine. Residue lysine 40 is modified to N6-succinyllysine. Histidine 58 is an O2 binding site. Residue histidine 87 participates in heme b binding. Phosphoserine is present on serine 102. Threonine 108 carries the post-translational modification Phosphothreonine. Serine 124 is modified (phosphoserine). A phosphothreonine mark is found at threonine 134 and threonine 137. Serine 138 carries the phosphoserine modification.

The protein belongs to the globin family. In terms of assembly, heterotetramer of two alpha chains and two beta chains. In terms of tissue distribution, red blood cells.

Its function is as follows. Involved in oxygen transport from the lung to the various peripheral tissues. In terms of biological role, hemopressin acts as an antagonist peptide of the cannabinoid receptor CNR1. Hemopressin-binding efficiently blocks cannabinoid receptor CNR1 and subsequent signaling. In Loxodonta africana (African elephant), this protein is Hemoglobin subunit alpha (HBA).